We begin with the raw amino-acid sequence, 942 residues long: Calcium-activated chloride channel regulator 2 (942 aa).

An N-terminal signal peptide occupies residues 1–32; it reads MTHRDSTGPVIGLKLVTLLFTLSPELLFLGAG. At 33–905 the chain is on the extracellular side; that stretch reads LKLKENGYDG…SRDDLILKGV (873 aa). The interval 54 to 205 is metalloprotease domain; the sequence is DLKLITNIKE…CSSDITGVFV (152 aa). N-linked (GlcNAc...) asparagine glycosylation is found at Asn-74 and Asn-97. Zn(2+) is bound at residue His-164. Glu-165 is a catalytic residue. Zn(2+)-binding residues include His-168 and Asp-175. N-linked (GlcNAc...) asparagine glycosylation is found at Asn-231, Asn-235, Asn-254, and Asn-286. In terms of domain architecture, VWFA spans 311–483; that stretch reads VVCLVIDVSR…NGMTEAFVRI (173 aa). N-linked (GlcNAc...) asparagine glycans are attached at residues Asn-522, Asn-580, Asn-637, and Asn-821. A helical transmembrane segment spans residues 906–926; sequence LTTVGLIAILCLIMVVAHCIF. At 927-942 the chain is on the cytoplasmic side; it reads NRKKRPSRKENETKFL.

Belongs to the CLCR family. In terms of processing, the translation product is autoproteolytically cleaved by the metalloprotease domain in the endoplasmic reticulum into a N-terminal and a C-terminal products that remain physically associated with each other. The cleavage is necessary for calcium-activated chloride channel (CaCC) activation activity. N-glycosylated. Highly expressed in eye, spleen, lung, kidney, uterus, and endothelial cells. Weakly expressed in heart and throughout the gastrointestinal tract. Highly expressed in mammary cell lines. Its expression in immortalized cell line HC11 correlates with slow or arrested growth. Re-expression in mammary tumor cells reduces colony survival.

The protein localises to the cell membrane. Its subcellular location is the basal cell membrane. The protein resides in the cell junction. Its function is as follows. Plays a role in modulating chloride current across the plasma membrane in a calcium-dependent manner, and cell adhesion. Involved in basal cell adhesion and/or stratification of squamous epithelia. May act as a tumor suppressor in breast and colorectal cancer. Plays a key role for cell adhesion in the beginning stages of lung metastasis via the binding to ITGB4. The protein is Calcium-activated chloride channel regulator 2 (Clca2) of Mus musculus (Mouse).